Here is a 238-residue protein sequence, read N- to C-terminus: Succinate dehydrogenase iron-sulfur subunit (238 aa).

One can recognise a 2Fe-2S ferredoxin-type domain in the interval 1-97 (MKLEFSIYRY…KIVIRPLPGL (97 aa)). Cys55, Cys60, and Cys75 together coordinate [2Fe-2S] cluster. The region spanning 139–169 (QREKLDGLYECILCACCSTSCPSFWWNPDKF) is the 4Fe-4S ferredoxin-type domain. 3 residues coordinate [4Fe-4S] cluster: Cys149, Cys152, and Cys155. Position 159 (Cys159) interacts with [3Fe-4S] cluster. A ubiquinone is bound at residue Trp164. The [3Fe-4S] cluster site is built by Cys206 and Cys212. A [4Fe-4S] cluster-binding site is contributed by Cys216.

It belongs to the succinate dehydrogenase/fumarate reductase iron-sulfur protein family. In terms of assembly, part of an enzyme complex containing four subunits: a flavoprotein, an iron-sulfur, cytochrome b-556, and a hydrophobic anchor protein. Requires [2Fe-2S] cluster as cofactor. It depends on [3Fe-4S] cluster as a cofactor. The cofactor is [4Fe-4S] cluster.

The catalysed reaction is a quinone + succinate = fumarate + a quinol. The protein operates within carbohydrate metabolism; tricarboxylic acid cycle; fumarate from succinate (bacterial route): step 1/1. Two distinct, membrane-bound, FAD-containing enzymes are responsible for the catalysis of fumarate and succinate interconversion; the fumarate reductase is used in anaerobic growth, and the succinate dehydrogenase is used in aerobic growth. The polypeptide is Succinate dehydrogenase iron-sulfur subunit (sdhB) (Salmonella typhimurium (strain LT2 / SGSC1412 / ATCC 700720)).